A 194-amino-acid chain; its full sequence is MGYGNIMNVETTGASWQTAQQDKLGYSGVRASHTMANTDSGRMERYRSKINSVGAKYGIDPALIAAIISEESRAGNVLHDGWGDYDSNRGAYNAWGLMQVDVNPNGGGHTARGAWDSEEHLSQGAEILVYFIGRIRNKFPGWNTEQQLKGGIAAYNMGDGNVHSYDNVDGRTTGGDYSNDVVARAQWYKTQKGF.

Residues Glu-71 and Asp-84 contribute to the active site.

This sequence belongs to the glycosyl hydrolase 23 family. Expressed in intestine, liver, spleen, anterior kidney, posterior kidney, heart, gill, muscle and leukocytes.

The enzyme catalyses Hydrolysis of (1-&gt;4)-beta-linkages between N-acetylmuramic acid and N-acetyl-D-glucosamine residues in a peptidoglycan and between N-acetyl-D-glucosamine residues in chitodextrins.. In terms of biological role, has lytic activity against M.lysodeikticus, V.alginolyticus from Epinephelus fario, V.vulnificus from culture water, A.hydrophila from soft-shell turtle, A.hydrophila from goldfish and V.parahaemolyticus, P.fluorescens and V.fluvialis from culture water. The sequence is that of Lysozyme g from Epinephelus coioides (Orange-spotted grouper).